A 289-amino-acid polypeptide reads, in one-letter code: Syntaxin-3 (289 aa).

Residues 1–263 (MKDRLEQLKA…MKYQGQARKK (263 aa)) are Cytoplasmic-facing. Positions 32-111 (MDEFFSEIEE…IEEDEVRSSA (80 aa)) form a coiled coil. The t-SNARE coiled-coil homology domain maps to 191 to 253 (LSEIEGRHKD…EKARDETKRA (63 aa)). Residues 264–284 (LIIIIVIVVVLLGILALIIGL) traverse the membrane as a helical; Anchor for type IV membrane protein segment. Topologically, residues 285–289 (SVGLK) are extracellular.

The protein belongs to the syntaxin family. In terms of assembly, interacts with REEP6. Interacts with PRPH2 in rod and cone photoreceptors. Interacts with ROM1. Interacts with SNAP25. Interacts with VAMP2. Heart, spleen, lung and kidney.

The protein resides in the membrane. Its function is as follows. Potentially involved in docking of synaptic vesicles at presynaptic active zones. Apical receptor involved in membrane fusion of apical vesicles. Essential for survival of retinal photoreceetors. The sequence is that of Syntaxin-3 (Stx3) from Rattus norvegicus (Rat).